A 428-amino-acid chain; its full sequence is 3-phosphoshikimate 1-carboxyvinyltransferase (428 aa).

3-phosphoshikimate contacts are provided by Lys19, Ser20, and Arg24. Residue Lys19 coordinates phosphoenolpyruvate. Positions 91 and 119 each coordinate phosphoenolpyruvate. Residues Ser164, Gln166, Asp312, and Lys339 each contribute to the 3-phosphoshikimate site. Gln166 is a binding site for phosphoenolpyruvate. The Proton acceptor role is filled by Asp312. Phosphoenolpyruvate contacts are provided by Arg343 and Arg386.

This sequence belongs to the EPSP synthase family. In terms of assembly, monomer.

The protein resides in the cytoplasm. The enzyme catalyses 3-phosphoshikimate + phosphoenolpyruvate = 5-O-(1-carboxyvinyl)-3-phosphoshikimate + phosphate. It functions in the pathway metabolic intermediate biosynthesis; chorismate biosynthesis; chorismate from D-erythrose 4-phosphate and phosphoenolpyruvate: step 6/7. Functionally, catalyzes the transfer of the enolpyruvyl moiety of phosphoenolpyruvate (PEP) to the 5-hydroxyl of shikimate-3-phosphate (S3P) to produce enolpyruvyl shikimate-3-phosphate and inorganic phosphate. The sequence is that of 3-phosphoshikimate 1-carboxyvinyltransferase from Bacillus pumilus (strain SAFR-032).